Consider the following 122-residue polypeptide: Large ribosomal subunit protein uL14 (122 aa).

It belongs to the universal ribosomal protein uL14 family. Part of the 50S ribosomal subunit. Forms a cluster with proteins L3 and L19. In the 70S ribosome, L14 and L19 interact and together make contacts with the 16S rRNA in bridges B5 and B8.

Functionally, binds to 23S rRNA. Forms part of two intersubunit bridges in the 70S ribosome. This chain is Large ribosomal subunit protein uL14, found in Chlamydia abortus (strain DSM 27085 / S26/3) (Chlamydophila abortus).